The sequence spans 826 residues: Ubiquitin carboxyl-terminal hydrolase 16 (826 aa).

The segment at 22–142 (PVCRHIRKGL…QVVDYVRKQA (121 aa)) adopts a UBP-type zinc-finger fold. Positions 24, 26, 48, 51, 74, 77, 82, 90, 94, 103, 116, and 119 each coordinate Zn(2+). A Glycyl lysine isopeptide (Lys-Gly) (interchain with G-Cter in SUMO2) cross-link involves residue K140. The disordered stretch occupies residues 144–189 (NTTPESAEDNGNIELENKKLEKESKNEQEREKKENMARENPSMNST). Over residues 158–180 (LENKKLEKESKNEQEREKKENMA) the composition is skewed to basic and acidic residues. S188 is modified (phosphoserine). Residues 195-825 (KGLSNLGNTC…QAYLLFYERI (631 aa)) enclose the USP domain. The active-site Nucleophile is C204. A compositionally biased stretch (basic and acidic residues) spans 393–407 (SGKKSINDKNLKKTM). The segment at 393-458 (SGKKSINDKN…QAKNQRRQQK (66 aa)) is disordered. Acidic residues predominate over residues 408–419 (EDEDKDSEEEKD). A Phosphoserine modification is found at S414. Positions 420–429 (NDSYLKERND) are enriched in basic and acidic residues. Positions 437–457 (HLQKKAKKQAKKQAKNQRRQQ) are enriched in basic residues. S530 and S551 each carry phosphoserine. H760 functions as the Proton acceptor in the catalytic mechanism.

This sequence belongs to the peptidase C19 family. USP16 subfamily. In terms of assembly, homotetramer. Associates with late pre-40S ribosomes. Interacts with CEP78; promoting deubiquitination of tektins. Phosphorylated at the onset of mitosis and dephosphorylated during the metaphase/anaphase transition. Phosphorylation by AURKB enhances the deubiquitinase activity.

It localises to the nucleus. It carries out the reaction Thiol-dependent hydrolysis of ester, thioester, amide, peptide and isopeptide bonds formed by the C-terminal Gly of ubiquitin (a 76-residue protein attached to proteins as an intracellular targeting signal).. In terms of biological role, specifically deubiquitinates 'Lys-120' of histone H2A (H2AK119Ub), a specific tag for epigenetic transcriptional repression, thereby acting as a coactivator. Deubiquitination of histone H2A is a prerequisite for subsequent phosphorylation at 'Ser-11' of histone H3 (H3S10ph), and is required for chromosome segregation when cells enter into mitosis. In resting B- and T-lymphocytes, phosphorylation by AURKB leads to enhance its activity, thereby maintaining transcription in resting lymphocytes. Regulates Hox gene expression via histone H2A deubiquitination. Prefers nucleosomal substrates. Does not deubiquitinate histone H2B. Also deubiquitinates non-histone proteins, such as ribosomal protein RPS27A: deubiquitination of monoubiquitinated RPS27A promotes maturation of the 40S ribosomal subunit. Also mediates deubiquitination of tektin proteins (TEKT1, TEKT2, TEK3, TEKT4 and TEKT5), promoting their stability. The sequence is that of Ubiquitin carboxyl-terminal hydrolase 16 from Bos taurus (Bovine).